A 165-amino-acid polypeptide reads, in one-letter code: Putative TRAP transporter small permease protein HI_0051 (165 aa).

A run of 4 helical transmembrane segments spans residues 20–40, 51–71, 94–114, and 136–156; these read LEYL…FNSV, FSEE…IILV, IVLI…AYGA, and LYLA…FSMI.

The protein belongs to the TRAP transporter small permease family.

It is found in the cell inner membrane. This chain is Putative TRAP transporter small permease protein HI_0051, found in Haemophilus influenzae (strain ATCC 51907 / DSM 11121 / KW20 / Rd).